We begin with the raw amino-acid sequence, 213 residues long: Large ribosomal subunit protein uL1 (213 aa).

This sequence belongs to the universal ribosomal protein uL1 family. As to quaternary structure, part of the 50S ribosomal subunit.

In terms of biological role, binds directly to 23S rRNA. Probably involved in E site tRNA release. Protein L1 is also a translational repressor protein, it controls the translation of its operon by binding to its mRNA. This Methanosarcina mazei (strain ATCC BAA-159 / DSM 3647 / Goe1 / Go1 / JCM 11833 / OCM 88) (Methanosarcina frisia) protein is Large ribosomal subunit protein uL1.